The following is a 444-amino-acid chain: GTPase Der (444 aa).

EngA-type G domains are found at residues P3–E167 and L180–Q353. Residues G9–S16, D56–M60, N119–D122, G186–S193, D233–V237, and N298–D301 contribute to the GTP site. Residues I354–H438 enclose the KH-like domain.

The protein belongs to the TRAFAC class TrmE-Era-EngA-EngB-Septin-like GTPase superfamily. EngA (Der) GTPase family. As to quaternary structure, associates with the 50S ribosomal subunit.

Functionally, GTPase that plays an essential role in the late steps of ribosome biogenesis. The protein is GTPase Der of Solidesulfovibrio magneticus (strain ATCC 700980 / DSM 13731 / RS-1) (Desulfovibrio magneticus).